Reading from the N-terminus, the 414-residue chain is Imidazolonepropionase (414 aa).

A compositionally biased stretch (polar residues) spans 1 to 20; it reads MSHQLFRNTRIYSPMDSGQP. Residues 1 to 26 are disordered; sequence MSHQLFRNTRIYSPMDSGQPSAGKAQ. Residues His-81 and His-83 each contribute to the Fe(3+) site. Zn(2+)-binding residues include His-81 and His-83. Residues Arg-90, Tyr-153, and His-186 each coordinate 4-imidazolone-5-propanoate. An N-formimidoyl-L-glutamate-binding site is contributed by Tyr-153. His-251 contacts Fe(3+). A Zn(2+)-binding site is contributed by His-251. Position 254 (Glu-254) interacts with 4-imidazolone-5-propanoate. Asp-325 serves as a coordination point for Fe(3+). Residue Asp-325 coordinates Zn(2+). Asn-327 and Gly-329 together coordinate N-formimidoyl-L-glutamate. Residue Ser-330 participates in 4-imidazolone-5-propanoate binding.

Belongs to the metallo-dependent hydrolases superfamily. HutI family. Zn(2+) serves as cofactor. Requires Fe(3+) as cofactor.

The protein resides in the cytoplasm. It catalyses the reaction 4-imidazolone-5-propanoate + H2O = N-formimidoyl-L-glutamate. It participates in amino-acid degradation; L-histidine degradation into L-glutamate; N-formimidoyl-L-glutamate from L-histidine: step 3/3. Catalyzes the hydrolytic cleavage of the carbon-nitrogen bond in imidazolone-5-propanoate to yield N-formimidoyl-L-glutamate. It is the third step in the universal histidine degradation pathway. The polypeptide is Imidazolonepropionase (Desulfotalea psychrophila (strain LSv54 / DSM 12343)).